The following is a 214-amino-acid chain: Riboflavin kinase (214 aa).

The segment at 1 to 27 is disordered; sequence MRPDRPRDPVTGPDEGPESPYPIRMSG. Mg(2+) is bound by residues Thr44 and Asn46. The active-site Nucleophile is Glu101.

This sequence belongs to the flavokinase family. Zn(2+) is required as a cofactor. It depends on Mg(2+) as a cofactor.

The catalysed reaction is riboflavin + ATP = FMN + ADP + H(+). It functions in the pathway cofactor biosynthesis; FMN biosynthesis; FMN from riboflavin (ATP route): step 1/1. Functionally, catalyzes the phosphorylation of riboflavin (vitamin B2) to form flavin mononucleotide (FMN) coenzyme. The polypeptide is Riboflavin kinase (fmn1) (Aspergillus niger (strain ATCC MYA-4892 / CBS 513.88 / FGSC A1513)).